A 125-amino-acid chain; its full sequence is Large ribosomal subunit protein bL12 (125 aa).

This sequence belongs to the bacterial ribosomal protein bL12 family. Homodimer. Part of the ribosomal stalk of the 50S ribosomal subunit. Forms a multimeric L10(L12)X complex, where L10 forms an elongated spine to which 2 to 4 L12 dimers bind in a sequential fashion. Binds GTP-bound translation factors.

Its function is as follows. Forms part of the ribosomal stalk which helps the ribosome interact with GTP-bound translation factors. Is thus essential for accurate translation. This Bradyrhizobium sp. (strain ORS 278) protein is Large ribosomal subunit protein bL12.